A 164-amino-acid chain; its full sequence is Histone H3-like centromeric protein CENH3 (164 aa).

Residues 1–11 show a composition bias toward basic residues; the sequence is MARTKHPAVRK. The interval 1–71 is disordered; that stretch reads MARTKHPAVR…QRKPHRFRPG (71 aa). K5 is modified (N6,N6,N6-trimethyllysine; alternate). N6,N6-dimethyllysine; alternate is present on K5. K5, K19, and K30 each carry N6-methyllysine; alternate. A compositionally biased stretch (basic and acidic residues) spans 12-26; it reads SKAEPKKKLQFERSP. Residue K19 is modified to N6-acetyllysine; alternate. An N6,N6,N6-trimethyllysine; alternate modification is found at K30. K30 carries the N6,N6-dimethyllysine; alternate modification. Low complexity predominate over residues 40 to 55; sequence TSATTRSAAGTSASGT. Residues 60-69 are compositionally biased toward basic residues; the sequence is TKQRKPHRFR.

It belongs to the histone H3 family.

The protein resides in the chromosome. The protein localises to the centromere. It localises to the kinetochore. In terms of biological role, histone H3-like variant which exclusively replaces conventional H3 in the nucleosome core of centromeric chromatin at the inner plate of the kinetochore. Required for recruitment and assembly of kinetochore proteins, mitotic progression and chromosome segregation. The chain is Histone H3-like centromeric protein CENH3 from Oryza sativa subsp. japonica (Rice).